Here is a 67-residue protein sequence, read N- to C-terminus: Sperm protamine P1 (67 aa).

Residues 1 to 67 form a disordered region; the sequence is MASYRNSRSR…RRRKRNNENK (67 aa). Basic residues-rich tracts occupy residues 7 to 25 and 34 to 67; these read SRSR…RSRV and RSSR…NENK.

This sequence belongs to the protamine P1 family. As to expression, testis.

Its subcellular location is the nucleus. The protein resides in the chromosome. Its function is as follows. Protamines substitute for histones in the chromatin of sperm during the haploid phase of spermatogenesis. They compact sperm DNA into a highly condensed, stable and inactive complex. The polypeptide is Sperm protamine P1 (PRM1) (Isoodon macrourus (Short-nosed bandicoot)).